Consider the following 355-residue polypeptide: Phosphate acyltransferase (355 aa).

Belongs to the PlsX family. In terms of assembly, homodimer. Probably interacts with PlsY.

The protein localises to the cytoplasm. The enzyme catalyses a fatty acyl-[ACP] + phosphate = an acyl phosphate + holo-[ACP]. The protein operates within lipid metabolism; phospholipid metabolism. Catalyzes the reversible formation of acyl-phosphate (acyl-PO(4)) from acyl-[acyl-carrier-protein] (acyl-ACP). This enzyme utilizes acyl-ACP as fatty acyl donor, but not acyl-CoA. This is Phosphate acyltransferase from Erythrobacter litoralis (strain HTCC2594).